We begin with the raw amino-acid sequence, 490 residues long: Glutamate--tRNA ligase 2 (490 aa).

Positions 33–43 match the 'HIGH' region motif; the sequence is PSPTGYLHIGG. Residues 262–266 carry the 'KMSKS' region motif; it reads KLSKR. ATP is bound at residue Lys-265.

The protein belongs to the class-I aminoacyl-tRNA synthetase family. Glutamate--tRNA ligase type 1 subfamily. In terms of assembly, monomer.

It localises to the cytoplasm. The enzyme catalyses tRNA(Glu) + L-glutamate + ATP = L-glutamyl-tRNA(Glu) + AMP + diphosphate. Its function is as follows. Catalyzes the attachment of glutamate to tRNA(Glu) in a two-step reaction: glutamate is first activated by ATP to form Glu-AMP and then transferred to the acceptor end of tRNA(Glu). The protein is Glutamate--tRNA ligase 2 of Parvibaculum lavamentivorans (strain DS-1 / DSM 13023 / NCIMB 13966).